Consider the following 376-residue polypeptide: MSCPYFEQKSCTSCTHMNTPYSQQLETKDNALRTLFSDVAQSAWLAPVQSDSMHCRNKAKMVALGAAHQPTLGIESVQDGTPISLVHCPLYTQDSQALLAYLQEWIRTSGIPPYNKVKKKGELKFVLLTRSQARGEFMLRFVVRSEAALERIRHNLPRLQQAFPAVRVISANIQPIHMARLEGEQEIFLTDAHYLLEEFNGVPMVVRPKSFFQTNPHVAAQLYATARDWVAELKPRQMWDLFCGVGGFALHCAPHAEQVIGIEIEEEAINSAKLSAQQLGIGNLRFSALDSAAYSQAQTQAADLILVNPPRRGLGQALSEQLEQLAPQYLIYSSCNPVTMQQDLAHLPSYQVERAQWFDMFPHTDHAEVMMLLVRQ.

[4Fe-4S] cluster contacts are provided by Cys-3, Cys-11, Cys-14, and Cys-88. 4 residues coordinate S-adenosyl-L-methionine: Gln-213, Phe-242, Glu-263, and Asn-308. The active-site Nucleophile is the Cys-335.

Belongs to the class I-like SAM-binding methyltransferase superfamily. RNA M5U methyltransferase family. RlmC subfamily.

The catalysed reaction is uridine(747) in 23S rRNA + S-adenosyl-L-methionine = 5-methyluridine(747) in 23S rRNA + S-adenosyl-L-homocysteine + H(+). Functionally, catalyzes the formation of 5-methyl-uridine at position 747 (m5U747) in 23S rRNA. The protein is 23S rRNA (uracil(747)-C(5))-methyltransferase RlmC of Vibrio vulnificus (strain YJ016).